The following is a 282-amino-acid chain: Phosphatidylglycerol--prolipoprotein diacylglyceryl transferase (282 aa).

4 consecutive transmembrane segments (helical) span residues 23-43 (IGPL…LLGW), 71-91 (FIVW…IFFY), 106-126 (IWNG…AMII), and 132-152 (GIPI…GLFF). Arg154 contributes to the a 1,2-diacyl-sn-glycero-3-phospho-(1'-sn-glycerol) binding site. 3 consecutive transmembrane segments (helical) span residues 189–209 (LYEA…LVYG), 217–237 (GFIT…VEFF), and 252–272 (WLTM…WAML).

This sequence belongs to the Lgt family.

It localises to the cell inner membrane. The catalysed reaction is L-cysteinyl-[prolipoprotein] + a 1,2-diacyl-sn-glycero-3-phospho-(1'-sn-glycerol) = an S-1,2-diacyl-sn-glyceryl-L-cysteinyl-[prolipoprotein] + sn-glycerol 1-phosphate + H(+). Its pathway is protein modification; lipoprotein biosynthesis (diacylglyceryl transfer). Functionally, catalyzes the transfer of the diacylglyceryl group from phosphatidylglycerol to the sulfhydryl group of the N-terminal cysteine of a prolipoprotein, the first step in the formation of mature lipoproteins. This is Phosphatidylglycerol--prolipoprotein diacylglyceryl transferase from Rhizobium leguminosarum bv. trifolii (strain WSM2304).